The primary structure comprises 160 residues: Putative 4-hydroxy-4-methyl-2-oxoglutarate aldolase (160 aa).

Substrate-binding positions include 78–81 and R100; that span reads GDVI. D101 is an a divalent metal cation binding site.

The protein belongs to the class II aldolase/RraA-like family. In terms of assembly, homotrimer. Requires a divalent metal cation as cofactor.

It catalyses the reaction 4-hydroxy-4-methyl-2-oxoglutarate = 2 pyruvate. The enzyme catalyses oxaloacetate + H(+) = pyruvate + CO2. Its function is as follows. Catalyzes the aldol cleavage of 4-hydroxy-4-methyl-2-oxoglutarate (HMG) into 2 molecules of pyruvate. Also contains a secondary oxaloacetate (OAA) decarboxylase activity due to the common pyruvate enolate transition state formed following C-C bond cleavage in the retro-aldol and decarboxylation reactions. This is Putative 4-hydroxy-4-methyl-2-oxoglutarate aldolase from Mycolicibacterium paratuberculosis (strain ATCC BAA-968 / K-10) (Mycobacterium paratuberculosis).